Here is a 279-residue protein sequence, read N- to C-terminus: Esterase CG5412 (279 aa).

Residues serine 133, aspartate 191, and histidine 218 each act as charge relay system in the active site. Positions 249 to 279 (QSGNASFVDSGAEDDNDAEVAAMTAELDESD) are disordered.

Belongs to the LovG family.

This chain is Esterase CG5412, found in Drosophila melanogaster (Fruit fly).